A 170-amino-acid chain; its full sequence is Putative 4-hydroxy-4-methyl-2-oxoglutarate aldolase (170 aa).

Substrate is bound by residues 81–84 (GDII) and R103. Residue D104 participates in a divalent metal cation binding.

Belongs to the class II aldolase/RraA-like family. Homotrimer. A divalent metal cation serves as cofactor.

It carries out the reaction 4-hydroxy-4-methyl-2-oxoglutarate = 2 pyruvate. The catalysed reaction is oxaloacetate + H(+) = pyruvate + CO2. In terms of biological role, catalyzes the aldol cleavage of 4-hydroxy-4-methyl-2-oxoglutarate (HMG) into 2 molecules of pyruvate. Also contains a secondary oxaloacetate (OAA) decarboxylase activity due to the common pyruvate enolate transition state formed following C-C bond cleavage in the retro-aldol and decarboxylation reactions. The polypeptide is Putative 4-hydroxy-4-methyl-2-oxoglutarate aldolase (Corynebacterium efficiens (strain DSM 44549 / YS-314 / AJ 12310 / JCM 11189 / NBRC 100395)).